The chain runs to 324 residues: DNA repair and recombination protein RadA (324 aa).

114-121 (GEFGSGKT) lines the ATP pocket.

It belongs to the eukaryotic RecA-like protein family.

Involved in DNA repair and in homologous recombination. Binds and assemble on single-stranded DNA to form a nucleoprotein filament. Hydrolyzes ATP in a ssDNA-dependent manner and promotes DNA strand exchange between homologous DNA molecules. The polypeptide is DNA repair and recombination protein RadA (Sulfurisphaera tokodaii (strain DSM 16993 / JCM 10545 / NBRC 100140 / 7) (Sulfolobus tokodaii)).